A 556-amino-acid chain; its full sequence is Genetic interactor of prohibitins 3, mitochondrial (556 aa).

The N-terminal 21 residues, 1–21 (MLNLCHALRGVRQFSCSVIVK), are a transit peptide targeting the mitochondrion. Residues 113–305 (ESTLNDILNY…LFDLPGYSTS (193 aa)) enclose the CP-type G domain.

Belongs to the TRAFAC class YlqF/YawG GTPase family. GEP3 subfamily.

Its subcellular location is the mitochondrion. Interacts genetically with prohibitins and thus may be involved in the mitochondrial lipid metabolism. The protein is Genetic interactor of prohibitins 3, mitochondrial (GEP3) of Saccharomyces cerevisiae (strain JAY291) (Baker's yeast).